A 58-amino-acid chain; its full sequence is Small ribosomal subunit protein bS21C (58 aa).

The interval 38-58 (YEKPSLRRKRKAEAARKGGRY) is disordered. Positions 49–58 (AEAARKGGRY) are enriched in basic and acidic residues.

It belongs to the bacterial ribosomal protein bS21 family.

The protein is Small ribosomal subunit protein bS21C (rpsU3) of Nostoc sp. (strain PCC 7120 / SAG 25.82 / UTEX 2576).